A 241-amino-acid polypeptide reads, in one-letter code: Lipopolysaccharide export system ATP-binding protein LptB (241 aa).

In terms of domain architecture, ABC transporter spans 5 to 237 (LQAQSLFKSY…PMVRQVYLGD (233 aa)). 37–44 (GPNGAGKT) is a binding site for ATP.

This sequence belongs to the ABC transporter superfamily. Outer membrane lipopolysaccharide export (TC 1.B.42) family. As to quaternary structure, component of the lipopolysaccharide transport and assembly complex. The LptBFG transporter is composed of two ATP-binding proteins (LptB) and two transmembrane proteins (LptF and LptG).

Its subcellular location is the cytoplasm. It localises to the cell inner membrane. Functionally, part of the ABC transporter complex LptBFG involved in the translocation of lipopolysaccharide (LPS) from the inner membrane to the outer membrane. Probably responsible for energy coupling to the transport system. This Acidithiobacillus ferridurans protein is Lipopolysaccharide export system ATP-binding protein LptB (lptB).